The chain runs to 195 residues: Probable DNA-directed RNA polymerase subunit delta (195 aa).

The region spanning Phe-14 to Trp-81 is the HTH HARE-type domain. Acidic residues-rich tracts occupy residues Asp-120–Ile-172 and Gly-181–Lys-195. Residues Asp-120–Lys-195 are disordered.

Belongs to the RpoE family. As to quaternary structure, RNAP is composed of a core of 2 alpha, a beta and a beta' subunits. The core is associated with a delta subunit and one of several sigma factors.

Its function is as follows. Participates in both the initiation and recycling phases of transcription. In the presence of the delta subunit, RNAP displays an increased specificity of transcription, a decreased affinity for nucleic acids, and an increased efficiency of RNA synthesis because of enhanced recycling. The polypeptide is Probable DNA-directed RNA polymerase subunit delta (Leuconostoc mesenteroides subsp. mesenteroides (strain ATCC 8293 / DSM 20343 / BCRC 11652 / CCM 1803 / JCM 6124 / NCDO 523 / NBRC 100496 / NCIMB 8023 / NCTC 12954 / NRRL B-1118 / 37Y)).